The chain runs to 172 residues: S-ribosylhomocysteine lyase (172 aa).

Residues histidine 54, histidine 58, and cysteine 128 each coordinate Fe cation.

The protein belongs to the LuxS family. In terms of assembly, homodimer. The cofactor is Fe cation.

The catalysed reaction is S-(5-deoxy-D-ribos-5-yl)-L-homocysteine = (S)-4,5-dihydroxypentane-2,3-dione + L-homocysteine. Its function is as follows. Involved in the synthesis of autoinducer 2 (AI-2) which is secreted by bacteria and is used to communicate both the cell density and the metabolic potential of the environment. The regulation of gene expression in response to changes in cell density is called quorum sensing. Catalyzes the transformation of S-ribosylhomocysteine (RHC) to homocysteine (HC) and 4,5-dihydroxy-2,3-pentadione (DPD). The polypeptide is S-ribosylhomocysteine lyase (Photobacterium profundum (strain SS9)).